Reading from the N-terminus, the 181-residue chain is CASP-like protein 1F1 (181 aa).

Topologically, residues M1 to K18 are cytoplasmic. The chain crosses the membrane as a helical span at residues L19–S39. Residues W40 to A70 lie on the Extracellular side of the membrane. A helical transmembrane segment spans residues F71 to V91. Residues R92 to Y100 lie on the Cytoplasmic side of the membrane. The chain crosses the membrane as a helical span at residues F101–A121. Over T122–Q152 the chain is Extracellular. The helical transmembrane segment at T153 to A173 threads the bilayer. The Cytoplasmic segment spans residues S174–A181.

It belongs to the Casparian strip membrane proteins (CASP) family. Homodimer and heterodimers.

The protein resides in the cell membrane. The protein is CASP-like protein 1F1 of Populus trichocarpa (Western balsam poplar).